Reading from the N-terminus, the 219-residue chain is Orotate phosphoribosyltransferase (219 aa).

Lysine 26 contributes to the 5-phospho-alpha-D-ribose 1-diphosphate binding site. 34 to 35 (FF) lines the orotate pocket. 5-phospho-alpha-D-ribose 1-diphosphate is bound by residues 72–73 (YK), arginine 98, lysine 99, lysine 102, histidine 104, and 124–132 (DDVITAGTA). Orotate is bound by residues threonine 128 and arginine 156.

The protein belongs to the purine/pyrimidine phosphoribosyltransferase family. PyrE subfamily. As to quaternary structure, homodimer. Mg(2+) is required as a cofactor.

The enzyme catalyses orotidine 5'-phosphate + diphosphate = orotate + 5-phospho-alpha-D-ribose 1-diphosphate. It functions in the pathway pyrimidine metabolism; UMP biosynthesis via de novo pathway; UMP from orotate: step 1/2. Catalyzes the transfer of a ribosyl phosphate group from 5-phosphoribose 1-diphosphate to orotate, leading to the formation of orotidine monophosphate (OMP). The sequence is that of Orotate phosphoribosyltransferase from Xanthomonas campestris pv. campestris (strain 8004).